Here is a 345-residue protein sequence, read N- to C-terminus: Ferredoxin--NADP reductase (345 aa).

Asp38, Gln46, Tyr51, Val91, Phe129, Asp295, and Thr336 together coordinate FAD.

Belongs to the ferredoxin--NADP reductase type 2 family. As to quaternary structure, homodimer. Requires FAD as cofactor.

The enzyme catalyses 2 reduced [2Fe-2S]-[ferredoxin] + NADP(+) + H(+) = 2 oxidized [2Fe-2S]-[ferredoxin] + NADPH. The chain is Ferredoxin--NADP reductase from Rhodospirillum rubrum (strain ATCC 11170 / ATH 1.1.1 / DSM 467 / LMG 4362 / NCIMB 8255 / S1).